Here is a 151-residue protein sequence, read N- to C-terminus: Large ribosomal subunit protein bL9 (151 aa).

This sequence belongs to the bacterial ribosomal protein bL9 family.

Its function is as follows. Binds to the 23S rRNA. This chain is Large ribosomal subunit protein bL9, found in Prochlorococcus marinus (strain MIT 9215).